A 397-amino-acid chain; its full sequence is Mannonate dehydratase (397 aa).

Belongs to the mannonate dehydratase family. Fe(2+) serves as cofactor. It depends on Mn(2+) as a cofactor.

The catalysed reaction is D-mannonate = 2-dehydro-3-deoxy-D-gluconate + H2O. It participates in carbohydrate metabolism; pentose and glucuronate interconversion. Catalyzes the dehydration of D-mannonate. In Yersinia pseudotuberculosis serotype O:1b (strain IP 31758), this protein is Mannonate dehydratase.